Reading from the N-terminus, the 485-residue chain is Aspartyl/glutamyl-tRNA(Asn/Gln) amidotransferase subunit B (485 aa).

It belongs to the GatB/GatE family. GatB subfamily. In terms of assembly, heterotrimer of A, B and C subunits.

It catalyses the reaction L-glutamyl-tRNA(Gln) + L-glutamine + ATP + H2O = L-glutaminyl-tRNA(Gln) + L-glutamate + ADP + phosphate + H(+). It carries out the reaction L-aspartyl-tRNA(Asn) + L-glutamine + ATP + H2O = L-asparaginyl-tRNA(Asn) + L-glutamate + ADP + phosphate + 2 H(+). Its function is as follows. Allows the formation of correctly charged Asn-tRNA(Asn) or Gln-tRNA(Gln) through the transamidation of misacylated Asp-tRNA(Asn) or Glu-tRNA(Gln) in organisms which lack either or both of asparaginyl-tRNA or glutaminyl-tRNA synthetases. The reaction takes place in the presence of glutamine and ATP through an activated phospho-Asp-tRNA(Asn) or phospho-Glu-tRNA(Gln). This chain is Aspartyl/glutamyl-tRNA(Asn/Gln) amidotransferase subunit B, found in Methylacidiphilum infernorum (isolate V4) (Methylokorus infernorum (strain V4)).